The following is a 410-amino-acid chain: Dipeptidase 1 (410 aa).

An N-terminal signal peptide occupies residues 1 to 16 (MVIIWWFWSLLAICAS). Zn(2+) is bound by residues His36 and Asp38. A disulfide bond links Cys87 and Cys170. Residue Asn121 is glycosylated (N-linked (GlcNAc...) asparagine). Glu141 lines the Zn(2+) pocket. His168 lines the substrate pocket. Zn(2+) is bound by residues His214 and His235. Cys242 and Cys274 are oxidised to a cystine. Arg246 contacts substrate. N-linked (GlcNAc...) asparagine glycosylation occurs at Asn258. Substrate is bound at residue Asp304. Asn332 carries an N-linked (GlcNAc...) asparagine glycan. Residue Ser384 is the site of GPI-anchor amidated serine attachment. A propeptide spans 385-410 (QAHSIHLQTGALVASLASLLFRLHLL) (removed in mature form).

The protein belongs to the metallo-dependent hydrolases superfamily. Peptidase M19 family. In terms of assembly, homodimer; disulfide-linked. Requires Zn(2+) as cofactor. Expressed in heart, lung, skeletal muscle, kidney, liver, and testis. Not detected in brain and spleen.

The protein localises to the apical cell membrane. Its subcellular location is the cell projection. The protein resides in the microvillus membrane. The catalysed reaction is an L-aminoacyl-L-amino acid + H2O = 2 an L-alpha-amino acid. It carries out the reaction leukotriene D4 + H2O = leukotriene E4 + glycine. It catalyses the reaction L-cystine-bis-glycine + 2 H2O = L-cystine + 2 glycine. The enzyme catalyses a beta-lactam + H2O = a substituted beta-amino acid. The catalysed reaction is glycyldehydrophenylalanine + H2O = 2,3-didehydrophenylalanine + glycine. With respect to regulation, inhibited by L-penicillamine. Inhibited by cilastatin. In terms of biological role, hydrolyzes a wide range of dipeptides including the conversion of leukotriene D4 to leukotriene E4. Hydrolyzes cystinyl-bis-glycine (cys-bis-gly) formed during glutathione degradation. Also possesses beta lactamase activity and hydrolytically inactivates beta-lactam antibiotics. Functionally, independently of its dipeptidase activity, acts as an adhesion receptor for neutrophil recruitment from bloodstream into inflamed lungs and liver. The sequence is that of Dipeptidase 1 (Dpep1) from Mus musculus (Mouse).